Consider the following 614-residue polypeptide: Vitamin B12 transporter BtuB (614 aa).

The signal sequence occupies residues 1–20; it reads MIKKASLLTACSVTAFSAWA. A TonB box motif is present at residues 26–33; that stretch reads DTLVVTAN. The region spanning 38–152 is the TBDR plug domain; the sequence is PRSTVLAPTT…IGGVVNIITT (115 aa). Cyanocob(III)alamin is bound by residues Leu83, Ser85, Asn92, and 110–111; that span reads VS. The TBDR beta-barrel domain occupies 155–614; sequence HPGTEISAGW…EYTLSGSYTF (460 aa). 3 beta stranded membrane passes run 158–165, 169–178, and 184–195; these read TEISAGWG, YQNYDVSTQQ, and TRVTLLGDYAHT. Residues Asp199, Gln211, Asp213, and Asp215 each coordinate Ca(2+). Beta stranded transmembrane passes span 217–227 and 232–248; these read FLSKTLYGALE and DVWS…NRTN. The Ca(2+) site is built by Tyr249 and Asp250. Residue Ala251 participates in cyanocob(III)alamin binding. Ca(2+) is bound at residue Asp261. 14 beta stranded membrane-spanning segments follow: residues 263–277, 279–296, 309–325, 328–337, 353–369, 371–381, 385–400, 403–417, 434–443, 449–458, 473–490, 494–509, 517–529, and 535–550; these read RKLY…LRYN, ELIK…KDYN, TLDE…NNII, HGNIGAGVDW, YDQR…QQVG, FTFEGAGRSDD, FGRH…WEFI, YRFI…KAPN, KSKQWEGAFE, VNWRISGYRN, YYNE…TANF, PLTH…ARNA, RRAK…QLDW, and DWGI…YDKD. Thr309 serves as a coordination point for cyanocob(III)alamin. Arg517 serves as a coordination point for cyanocob(III)alamin. Residue Tyr551 coordinates cyanocob(III)alamin. The next 3 beta stranded transmembrane spans lie at 558 to 572, 585 to 596, and 602 to 614; these read TVKM…LAVA, IANLFDKDYETV, and AGRE…SYTF. A TonB C-terminal box motif is present at residues 597 to 614; sequence YGYQTAGREYTLSGSYTF.

This sequence belongs to the TonB-dependent receptor family. BtuB (TC 1.B.14.3.1) subfamily.

It is found in the cell outer membrane. Involved in the active translocation of vitamin B12 (cyanocobalamin) across the outer membrane to the periplasmic space. It derives its energy for transport by interacting with the trans-periplasmic membrane protein TonB. This is Vitamin B12 transporter BtuB from Escherichia coli O1:K1 / APEC.